Reading from the N-terminus, the 906-residue chain is MQNLAPWESFFMFVNILLRDYEPVKRRQQGSESNEVMKYSFTVDTLICRELFRSILKEKTLGILGDYLNRECIFERTKKLVKLNYNDDEYDYDLDDILKIRKNSSGKLIVDDIDQAIFIIDHLSRKVDCKVFTKKSLVGFRHIEKTITEAGYKIRERRSIGLDWYTLLNDIRTSCAKHRTFVAFSKYRYVDFIAMLTAFHQVKAAKSNEEEHLSTIYSLYPFVEHNFDEDKEDAATTKQTTTTTTTTPQTRTRKRQATGDNTPTPTPAPAPKPTTPKPTPAPRKISSRKNGGLTNVRVDHISVNNIPTPSDTNESLSPPSTIISSSNSIKQCLVEVLESKGEISIDKIKSIFNCLQNKQYTGDLIDSMFQQNKSEKVITISSKLFNMSNKVDYDEINFAKLKDDILYLSRRLIYEKNTNLLIPTEEGEGIIGFLWLPVVNGALTASVYVSQLGADVDFKKISATVRFVQLCISMSDIIGFMELRSLSLDAFRSIANELLYMSDRILNLEADLRTLKDIVMKPTNLKKHVNVDNLFSRLSPEGSNGFANYLYDFISNHPYIKIDKSQNSIKLKETPNPVLVLTYDPKVVEHKVGFLFHCRSEISRFNAGGNKFILNNIQHSFTPNNIGVLSQDRENDLKRNYSMLTSNTSKLITGTGSGEHNLERFISITINNTAYDLIRVVLFRDISNGISISNLRDIFRENSDNRNRYLEYLGKSRLIRVFFIAPCLIQILEVNFAATQLTADKNFNRAIKSIKIRNLSYITIDIIVGGNVIDSIRGDATQVVQINASEFSFSVSCLKFSVSATLVSKKNLQNISTIVLNKYNEEKSYLQCVKKFSKLSKSFIRKFTGMNININALEELLLSEAGAYEDDDDDEGEGNEDDEDNDENEDEDEGEGEGDSSEDEDE.

Disordered stretches follow at residues 231-322 (KEDA…PSTI) and 865-906 (AGAY…DEDE). Residues 236–250 (TTKQTTTTTTTTPQT) are compositionally biased toward low complexity. Residues 264–281 (TPTPAPAPKPTTPKPTPA) show a composition bias toward pro residues. The segment covering 302–314 (SVNNIPTPSDTNE) has biased composition (polar residues). Residues 867 to 906 (AYEDDDDDEGEGNEDDEDNDENEDEDEGEGEGDSSEDEDE) show a composition bias toward acidic residues.

This is an uncharacterized protein from Dictyostelium sp. (strain GA11) (Slime mold).